Reading from the N-terminus, the 361-residue chain is Outer membrane protein P2 (361 aa).

An N-terminal signal peptide occupies residues 1–20; the sequence is MKKTLAALIVGAFAASAANA.

It belongs to the Gram-negative porin family. Homotrimer.

The protein resides in the cell outer membrane. Its function is as follows. Forms pores that allow passive diffusion of small molecules across the outer membrane. This is Outer membrane protein P2 (ompP2) from Haemophilus influenzae.